We begin with the raw amino-acid sequence, 112 residues long: MAASAIKGLSALRSSTGRPIAFVRKIPWTAAASELREHFAQFGHVRRCTVPFDKETGFHRGMGWVQFSSQEELQNALQQEHHIIDGVKIHVQAQRAKALHGAQTSDEERFLR.

Ser15 carries the post-translational modification Phosphoserine. An RRM domain is found at 19–98; sequence PIAFVRKIPW…IHVQAQRAKA (80 aa). Phosphothreonine is present on Thr104. Ser105 carries the post-translational modification Phosphoserine.

Its subcellular location is the mitochondrion. It localises to the nucleus. In terms of biological role, RNA-binding protein that acts as a nuclear receptor corepressor. Probably acts by binding the SRA RNA, and repressing the SRA-mediated nuclear receptor coactivation. Binds the STR7 loop of SRA RNA. Also able to repress glucocorticoid (GR), androgen (AR), thyroid (TR) and VDR-mediated transactivation. In Mus musculus (Mouse), this protein is SRA stem-loop-interacting RNA-binding protein, mitochondrial (Slirp).